The sequence spans 157 residues: Crossover junction endodeoxyribonuclease RuvC (157 aa).

Residues Asp7, Glu67, and Asp140 contribute to the active site. Residues Asp7, Glu67, and Asp140 each contribute to the Mg(2+) site.

This sequence belongs to the RuvC family. In terms of assembly, homodimer which binds Holliday junction (HJ) DNA. The HJ becomes 2-fold symmetrical on binding to RuvC with unstacked arms; it has a different conformation from HJ DNA in complex with RuvA. In the full resolvosome a probable DNA-RuvA(4)-RuvB(12)-RuvC(2) complex forms which resolves the HJ. The cofactor is Mg(2+).

It localises to the cytoplasm. It carries out the reaction Endonucleolytic cleavage at a junction such as a reciprocal single-stranded crossover between two homologous DNA duplexes (Holliday junction).. In terms of biological role, the RuvA-RuvB-RuvC complex processes Holliday junction (HJ) DNA during genetic recombination and DNA repair. Endonuclease that resolves HJ intermediates. Cleaves cruciform DNA by making single-stranded nicks across the HJ at symmetrical positions within the homologous arms, yielding a 5'-phosphate and a 3'-hydroxyl group; requires a central core of homology in the junction. The consensus cleavage sequence is 5'-(A/T)TT(C/G)-3'. Cleavage occurs on the 3'-side of the TT dinucleotide at the point of strand exchange. HJ branch migration catalyzed by RuvA-RuvB allows RuvC to scan DNA until it finds its consensus sequence, where it cleaves and resolves the cruciform DNA. The polypeptide is Crossover junction endodeoxyribonuclease RuvC (Rickettsia prowazekii (strain Madrid E)).